The sequence spans 122 residues: Large ribosomal subunit protein uL14 (122 aa).

The protein belongs to the universal ribosomal protein uL14 family. Part of the 50S ribosomal subunit. Forms a cluster with proteins L3 and L19. In the 70S ribosome, L14 and L19 interact and together make contacts with the 16S rRNA in bridges B5 and B8.

Binds to 23S rRNA. Forms part of two intersubunit bridges in the 70S ribosome. This chain is Large ribosomal subunit protein uL14, found in Lacticaseibacillus casei (strain BL23) (Lactobacillus casei).